Consider the following 297-residue polypeptide: uncharacterized protein (297 aa).

Residues 136–174 (FSETNDDSTDEEIDTPINDDDDDDKNNDADNNDINEDNK) are disordered. The segment covering 139-170 (TNDDSTDEEIDTPINDDDDDDKNNDADNNDIN) has biased composition (acidic residues).

This sequence to S.pombe SpBC725.03.

This is an uncharacterized protein from Saccharomyces cerevisiae (strain ATCC 204508 / S288c) (Baker's yeast).